A 122-amino-acid chain; its full sequence is Large ribosomal subunit protein uL14 (122 aa).

Belongs to the universal ribosomal protein uL14 family. In terms of assembly, part of the 50S ribosomal subunit. Forms a cluster with proteins L3 and L19. In the 70S ribosome, L14 and L19 interact and together make contacts with the 16S rRNA in bridges B5 and B8.

In terms of biological role, binds to 23S rRNA. Forms part of two intersubunit bridges in the 70S ribosome. The chain is Large ribosomal subunit protein uL14 from Pseudomonas entomophila (strain L48).